The following is a 203-amino-acid chain: UDP-N-acetylglucosamine transferase subunit ALG13 (203 aa).

It belongs to the glycosyltransferase 28 family. In terms of assembly, heterodimer with ALG14 to form a functional enzyme.

The protein resides in the endoplasmic reticulum. It carries out the reaction an N-acetyl-alpha-D-glucosaminyl-diphospho-di-trans,poly-cis-dolichol + UDP-N-acetyl-alpha-D-glucosamine = an N,N'-diacetylchitobiosyl-diphospho-di-trans,poly-cis-dolichol + UDP + H(+). Functionally, involved in protein N-glycosylation. Essential for the second step of the dolichol-linked oligosaccharide pathway. The chain is UDP-N-acetylglucosamine transferase subunit ALG13 (ALG13) from Eremothecium gossypii (strain ATCC 10895 / CBS 109.51 / FGSC 9923 / NRRL Y-1056) (Yeast).